A 106-amino-acid chain; its full sequence is Iron-sulfur cluster assembly protein CyaY (106 aa).

This sequence belongs to the frataxin family.

Involved in iron-sulfur (Fe-S) cluster assembly. May act as a regulator of Fe-S biogenesis. This chain is Iron-sulfur cluster assembly protein CyaY, found in Escherichia coli O139:H28 (strain E24377A / ETEC).